Consider the following 377-residue polypeptide: Lipoyl synthase, mitochondrial (377 aa).

[4Fe-4S] cluster-binding residues include cysteine 103, cysteine 108, cysteine 114, cysteine 134, cysteine 138, cysteine 141, and serine 349. The 220-residue stretch at 119–338 (EHGTQTATIM…EERGNELGFL (220 aa)) folds into the Radical SAM core domain.

It belongs to the radical SAM superfamily. Lipoyl synthase family. [4Fe-4S] cluster is required as a cofactor.

Its subcellular location is the mitochondrion. The catalysed reaction is [[Fe-S] cluster scaffold protein carrying a second [4Fe-4S](2+) cluster] + N(6)-octanoyl-L-lysyl-[protein] + 2 oxidized [2Fe-2S]-[ferredoxin] + 2 S-adenosyl-L-methionine + 4 H(+) = [[Fe-S] cluster scaffold protein] + N(6)-[(R)-dihydrolipoyl]-L-lysyl-[protein] + 4 Fe(3+) + 2 hydrogen sulfide + 2 5'-deoxyadenosine + 2 L-methionine + 2 reduced [2Fe-2S]-[ferredoxin]. Its pathway is protein modification; protein lipoylation via endogenous pathway; protein N(6)-(lipoyl)lysine from octanoyl-[acyl-carrier-protein]: step 2/2. Catalyzes the radical-mediated insertion of two sulfur atoms into the C-6 and C-8 positions of the octanoyl moiety bound to the lipoyl domains of lipoate-dependent enzymes, thereby converting the octanoylated domains into lipoylated derivatives. This Drosophila sechellia (Fruit fly) protein is Lipoyl synthase, mitochondrial.